Reading from the N-terminus, the 175-residue chain is Endoribonuclease YbeY (175 aa).

3 residues coordinate Zn(2+): H129, H133, and H139.

This sequence belongs to the endoribonuclease YbeY family. It depends on Zn(2+) as a cofactor.

Its subcellular location is the cytoplasm. Single strand-specific metallo-endoribonuclease involved in late-stage 70S ribosome quality control and in maturation of the 3' terminus of the 16S rRNA. In Lactobacillus gasseri (strain ATCC 33323 / DSM 20243 / BCRC 14619 / CIP 102991 / JCM 1131 / KCTC 3163 / NCIMB 11718 / NCTC 13722 / AM63), this protein is Endoribonuclease YbeY.